The following is a 165-amino-acid chain: Small ribosomal subunit protein uS17c (165 aa).

A chloroplast-targeting transit peptide spans 1–57; sequence MSLSFSLLKPPLSSSNPNPFLHGTTTKLSLLPSFSALSLSSSPPSSSTTYTFPVIKA. The segment at 128–165 is disordered; that stretch reads AVAPEGRQSSATRPKPIQAASDELGIPLESQVEGDKTV.

In terms of assembly, component of the chloroplast small ribosomal subunit (SSU). Mature 70S chloroplast ribosomes of higher plants consist of a small (30S) and a large (50S) subunit. The 30S small subunit contains 1 molecule of ribosomal RNA (16S rRNA) and 24 different proteins. The 50S large subunit contains 3 rRNA molecules (23S, 5S and 4.5S rRNA) and 33 different proteins.

It localises to the plastid. Its subcellular location is the chloroplast. Its function is as follows. Component of the chloroplast ribosome (chloro-ribosome), a dedicated translation machinery responsible for the synthesis of chloroplast genome-encoded proteins, including proteins of the transcription and translation machinery and components of the photosynthetic apparatus. The protein is Small ribosomal subunit protein uS17c (RPS17) of Spinacia oleracea (Spinach).